Reading from the N-terminus, the 445-residue chain is T-box transcription factor TBX19 (445 aa).

Residues 45 to 218 (LEDAPLWQRF…YNPFAKAFLD (174 aa)) constitute a DNA-binding region (T-box).

It localises to the nucleus. Transcriptional regulator involved in developmental processes. Can activate POMC gene expression and repress the alpha glycoprotein subunit and thyroid-stimulating hormone beta promoters. The sequence is that of T-box transcription factor TBX19 from Canis lupus familiaris (Dog).